Reading from the N-terminus, the 351-residue chain is Homoserine O-acetyltransferase (351 aa).

The region spanning 51-334 is the AB hydrolase-1 domain; that stretch reads VIWVLHALTG…IYGHDAFLIE (284 aa). Ser146 acts as the Nucleophile in catalysis. Substrate is bound at residue Arg212. Catalysis depends on residues Asp299 and His328. Asp329 contacts substrate.

It belongs to the AB hydrolase superfamily. MetX family. Homodimer.

It localises to the cytoplasm. The catalysed reaction is L-homoserine + acetyl-CoA = O-acetyl-L-homoserine + CoA. Its pathway is amino-acid biosynthesis; L-methionine biosynthesis via de novo pathway; O-acetyl-L-homoserine from L-homoserine: step 1/1. Its function is as follows. Transfers an acetyl group from acetyl-CoA to L-homoserine, forming acetyl-L-homoserine. In Cyclobacterium marinum (strain ATCC 25205 / DSM 745 / LMG 13164 / NCIMB 1802) (Flectobacillus marinus), this protein is Homoserine O-acetyltransferase.